Reading from the N-terminus, the 666-residue chain is Frizzled-3 (666 aa).

A signal peptide spans 1 to 22; that stretch reads MAMTWIVFSLWPLTVFMGHIGG. The FZ domain maps to 23–136; that stretch reads HSLFSCEPIT…CSRFPDCDEP (114 aa). Residues 23–205 lie on the Extracellular side of the membrane; it reads HSLFSCEPIT…REELSFARYF (183 aa). 5 disulfides stabilise this stretch: Cys-28/Cys-89, Cys-36/Cys-82, Cys-73/Cys-110, Cys-99/Cys-133, and Cys-103/Cys-127. The N-linked (GlcNAc...) asparagine glycan is linked to Asn-42. A helical membrane pass occupies residues 206 to 226; that stretch reads IGLISIICLSATLFTFLTFLI. The Cytoplasmic portion of the chain corresponds to 227–237; that stretch reads DVTRFRYPERP. A helical membrane pass occupies residues 238–258; the sequence is IIFYAVCYMMVSLIFFIGFLL. Residues 259–288 lie on the Extracellular side of the membrane; that stretch reads EDRVACNASIPAQYKASTVTQGSHNKACTM. N-linked (GlcNAc...) asparagine glycosylation occurs at Asn-265. Residues 289–309 form a helical membrane-spanning segment; it reads LFMILYFFTMAGSVWWVILTI. The Cytoplasmic portion of the chain corresponds to 310-328; sequence TWFLAAVPKWGSEAIEKKA. The chain crosses the membrane as a helical span at residues 329–349; it reads LLFHASAWGIPGTLTIILLAM. Over 350–374 the chain is Extracellular; the sequence is NKIEGDNISGVCFVGLYDVDALRYF. Asn-356 carries N-linked (GlcNAc...) asparagine glycosylation. The chain crosses the membrane as a helical span at residues 375-395; that stretch reads VLAPLCLYVVVGVSLLLAGII. Residues 396 to 420 are Cytoplasmic-facing; the sequence is SLNRVRIEIPLEKENQDKLVKFMIR. A helical membrane pass occupies residues 421 to 441; it reads IGVFSILYLVPLLVVIGCYFY. Residues 442-477 are Extracellular-facing; that stretch reads EQAYRGIWETTWIQERCREYHIPCPYQVTQMSRPDL. A helical transmembrane segment spans residues 478–498; sequence ILFLMKYLMALIVGIPSVFWV. Topologically, residues 499 to 666 are cytoplasmic; the sequence is GSKKTCFEWA…RVIEEDGTSA (168 aa). The Lys-Thr-X-X-X-Trp motif, mediates interaction with the PDZ domain of Dvl family members signature appears at 502–507; sequence KTCFEW. A disordered region spans residues 538-666; the sequence is RDPNTPIIRK…RVIEEDGTSA (129 aa). A compositionally biased stretch (polar residues) spans 550 to 565; that stretch reads GTSTQGTSTHASSTQL. Residues 617–638 show a composition bias toward basic and acidic residues; sequence LTDHSRHSSSHRLNEQSRHSSI. Residues 639–656 show a composition bias toward polar residues; it reads RDLSNNPMTHITHGTSMN.

The protein belongs to the G-protein coupled receptor Fz/Smo family. As to quaternary structure, interacts with VANGL2. In terms of processing, ubiquitinated by ZNRF3, leading to its degradation by the proteasome. In terms of tissue distribution, widely expressed. Relatively high expression in the CNS, including regions of the limbic system, in kidney, pancreas, skeletal muscle, uterus and testis.

Its subcellular location is the membrane. It is found in the cell membrane. The protein resides in the cell surface. The protein localises to the apical cell membrane. Its function is as follows. Receptor for Wnt proteins. Most of frizzled receptors are coupled to the beta-catenin canonical signaling pathway, which leads to the activation of disheveled proteins, inhibition of GSK-3 kinase, nuclear accumulation of beta-catenin and activation of Wnt target genes. A second signaling pathway involving PKC and calcium fluxes has been seen for some family members, but it is not yet clear if it represents a distinct pathway or if it can be integrated in the canonical pathway, as PKC seems to be required for Wnt-mediated inactivation of GSK-3 kinase. Both pathways seem to involve interactions with G-proteins. Activation by Wnt5A stimulates PKC activity via a G-protein-dependent mechanism. Involved in transduction and intercellular transmission of polarity information during tissue morphogenesis and/or in differentiated tissues. Plays a role in controlling early axon growth and guidance processes necessary for the formation of a subset of central and peripheral major fiber tracts. Required for the development of major fiber tracts in the central nervous system, including: the anterior commissure, the corpus callosum, the thalamocortical, corticothalamic and nigrostriatal tracts, the corticospinal tract, the fasciculus retroflexus, the mammillothalamic tract, the medial lemniscus, and ascending fiber tracts from the spinal cord to the brain. In the peripheral nervous system, controls axon growth in distinct populations of cranial and spinal motor neurons, including the facial branchimotor nerve, the hypoglossal nerve, the phrenic nerve, and motor nerves innervating dorsal limbs. Involved in the migration of cranial neural crest cells. May also be implicated in the transmission of sensory information from the trunk and limbs to the brain. Controls commissural sensory axons guidance after midline crossing along the anterior-posterior axis in the developing spinal cord in a Wnt-dependent signaling pathway. Together with FZD6, is involved in the neural tube closure and plays a role in the regulation of the establishment of planar cell polarity (PCP), particularly in the orientation of asymmetric bundles of stereocilia on the apical faces of a subset of auditory and vestibular sensory cells located in the inner ear. Promotes neurogenesis by maintaining sympathetic neuroblasts within the cell cycle in a beta-catenin-dependent manner. In Homo sapiens (Human), this protein is Frizzled-3 (FZD3).